A 634-amino-acid chain; its full sequence is Zinc finger and BTB domain-containing protein 22 (634 aa).

The 65-residue stretch at 57–121 (CDVSIRVQGR…AYTGRLSMAA (65 aa)) folds into the BTB domain. 2 disordered regions span residues 167-247 (TVPG…APVV) and 308-461 (APTP…GTSV). The segment covering 180-198 (TVAPATMGSARSHASSRAS) has biased composition (low complexity). Residues 199–209 (ENQSPSSSNYF) show a composition bias toward polar residues. Position 202 is a phosphoserine (Ser-202). Low complexity predominate over residues 217 to 229 (FSSSSQEAFAASA). Residues 317 to 340 (PDLEEEEEEEDLVLTCEDDEDEEL) show a composition bias toward acidic residues. The segment covering 452–461 (GAVTVGGTSV) has biased composition (low complexity). The C2H2-type 1; atypical zinc-finger motif lies at 486–507 (FLCHCGKAFSHKSMRDRHVNMH). 2 C2H2-type zinc fingers span residues 513–535 (FDCP…MKTH) and 541–562 (YECG…HRGH). A disordered region spans residues 568–634 (RLGGVGAVPG…MGFGGGGGAN (67 aa)). The segment covering 608 to 618 (PPSSRRVWSPP) has biased composition (low complexity).

This sequence belongs to the krueppel C2H2-type zinc-finger protein family.

The protein localises to the nucleus. Functionally, may be involved in transcriptional regulation. The protein is Zinc finger and BTB domain-containing protein 22 (ZBTB22) of Homo sapiens (Human).